A 597-amino-acid polypeptide reads, in one-letter code: Elongation factor 4 (597 aa).

The tr-type G domain maps to 2–184 (KNIRNFSIIA…EIVHKIPAPE (183 aa)). GTP is bound by residues 14–19 (DHGKST) and 131–134 (NKID).

The protein belongs to the TRAFAC class translation factor GTPase superfamily. Classic translation factor GTPase family. LepA subfamily.

The protein resides in the cell inner membrane. It catalyses the reaction GTP + H2O = GDP + phosphate + H(+). Required for accurate and efficient protein synthesis under certain stress conditions. May act as a fidelity factor of the translation reaction, by catalyzing a one-codon backward translocation of tRNAs on improperly translocated ribosomes. Back-translocation proceeds from a post-translocation (POST) complex to a pre-translocation (PRE) complex, thus giving elongation factor G a second chance to translocate the tRNAs correctly. Binds to ribosomes in a GTP-dependent manner. The protein is Elongation factor 4 of Actinobacillus succinogenes (strain ATCC 55618 / DSM 22257 / CCUG 43843 / 130Z).